The primary structure comprises 162 residues: Superoxide dismutase [Cu-Zn] (162 aa).

The signal sequence occupies residues 1–20; the sequence is MNKSGIILIGTILFSSMAIA. The Cu cation site is built by His66, His68, and His83. An intrachain disulfide couples Cys73 to Cys158. Zn(2+) is bound by residues His83, His92, His100, and Asp103. His137 serves as a coordination point for Cu cation.

It belongs to the Cu-Zn superoxide dismutase family. As to quaternary structure, homodimer. Cu cation is required as a cofactor. The cofactor is Zn(2+).

Its subcellular location is the periplasm. The catalysed reaction is 2 superoxide + 2 H(+) = H2O2 + O2. In terms of biological role, destroys radicals which are normally produced within the cells and which are toxic to biological systems. The protein is Superoxide dismutase [Cu-Zn] (sodC) of Legionella pneumophila.